A 1252-amino-acid polypeptide reads, in one-letter code: DNA-directed RNA polymerase subunit beta (1252 aa).

Belongs to the RNA polymerase beta chain family. The RNAP catalytic core consists of 2 alpha, 1 beta, 1 beta' and 1 omega subunit. When a sigma factor is associated with the core the holoenzyme is formed, which can initiate transcription.

It carries out the reaction RNA(n) + a ribonucleoside 5'-triphosphate = RNA(n+1) + diphosphate. Its function is as follows. DNA-dependent RNA polymerase catalyzes the transcription of DNA into RNA using the four ribonucleoside triphosphates as substrates. The sequence is that of DNA-directed RNA polymerase subunit beta from Chlamydia abortus (strain DSM 27085 / S26/3) (Chlamydophila abortus).